An 849-amino-acid polypeptide reads, in one-letter code: Serrate RNA effector molecule homolog A (849 aa).

Disordered stretches follow at residues methionine 1–aspartate 90 and lysine 276–leucine 409. Basic and acidic residues-rich tracts occupy residues tyrosine 8–leucine 73, lysine 276–asparagine 306, and glutamate 314–lysine 342. Residues serine 354–threonine 364 show a composition bias toward acidic residues. A compositionally biased stretch (basic and acidic residues) spans arginine 381–lysine 405.

This sequence belongs to the ARS2 family. In terms of assembly, interacts ncbp1/cbp80.

The protein localises to the nucleus. It localises to the nucleoplasm. Its subcellular location is the cytoplasm. Acts as a mediator between the cap-binding complex (CBC) and the primary microRNAs (miRNAs) processing machinery during cell proliferation. Contributes to the stability and delivery of capped primary miRNA transcripts to the primary miRNA processing complex, thereby playing a role in RNA-mediated gene silencing (RNAi) by miRNAs. In Xenopus laevis (African clawed frog), this protein is Serrate RNA effector molecule homolog A (srrt-a).